The sequence spans 161 residues: MSVVSQVILQADDQLRYPTSGELKGIQAFLTTGAQRIRIAETLAENEKKIVDQAQKQLFKKHPEYRAPGGNAYGQRQYNQCLRDYGWYLRLVTYGVLAGNKEPIETTGLIGVKEMYNSLNVPVPGMVDAVTVLKDAALGLLSAEDANETAPYFDYIIQFMS.

Asn71 is modified (N4-methylasparagine). Residue Cys81 participates in (2R,3E)-phycocyanobilin binding.

This sequence belongs to the phycobiliprotein family. Heterohexamer of two alpha chains, one alpha-B chain and three beta chains. Post-translationally, contains one covalently linked bilin chromophore.

Its subcellular location is the cellular thylakoid membrane. In terms of biological role, light-harvesting photosynthetic bile pigment-protein from the phycobiliprotein complex. Allophycocyanin has a maximum absorption at approximately 654 nanometers. The polypeptide is Allophycocyanin subunit alpha-B (apcD) (Synechocystis sp. (strain ATCC 27184 / PCC 6803 / Kazusa)).